We begin with the raw amino-acid sequence, 535 residues long: 5,6-dihydroxyindole-2-carboxylic acid oxidase (535 aa).

Positions 1–23 are cleaved as a signal peptide; sequence MQLPMLLLVSLPLLLNMFKPAEA. The Lumenal, melanosome segment spans residues 24-478; sequence QFPRQCATIE…GPLRVTEMIT (455 aa). 5 disulfides stabilise this stretch: Cys29–Cys40, Cys41–Cys64, Cys55–Cys98, Cys100–Cys109, and Cys112–Cys121. 2 N-linked (GlcNAc...) asparagine glycosylation sites follow: Asn95 and Asn103. Asn180 carries N-linked (GlcNAc...) asparagine glycosylation. His191, His214, and His223 together coordinate Zn(2+). 2 disulfide bridges follow: Cys257/Cys260 and Cys289/Cys302. N-linked (GlcNAc...) asparagine glycosylation is found at Asn303 and Asn349. Zn(2+) contacts are provided by His376 and His380. Residue Asn384 is glycosylated (N-linked (GlcNAc...) asparagine). His403 serves as a coordination point for Zn(2+). A helical transmembrane segment spans residues 479–499; that stretch reads IAIVTALVLVAIIFAAAACIV. Residues 500-535 are Cytoplasmic-facing; that stretch reads RAKKNRDELHQPLLTDQYQHYSDDYDGIATPSQSVV.

This sequence belongs to the tyrosinase family. As to quaternary structure, tyrosinase, TYRP1 and TYRP2 may form a multienzyme complex. It depends on Cu(2+) as a cofactor. The cofactor is Zn(2+).

It is found in the melanosome membrane. It catalyses the reaction 2 5,6-dihydroxyindole-2-carboxylate + O2 = 2 indole-5,6-quinone-2-carboxylate + 2 H2O. Its pathway is pigment biosynthesis; melanin biosynthesis. Its function is as follows. Plays a role in melanin biosynthesis. Catalyzes the oxidation of 5,6-dihydroxyindole-2-carboxylic acid (DHICA) into indole-5,6-quinone-2-carboxylic acid. May regulate or influence the type of melanin synthesized. Also to a lower extent, capable of hydroxylating tyrosine and producing melanin. This chain is 5,6-dihydroxyindole-2-carboxylic acid oxidase (TYRP1), found in Gallus gallus (Chicken).